A 424-amino-acid polypeptide reads, in one-letter code: Imidazolonepropionase (424 aa).

Residues histidine 81 and histidine 83 each coordinate Fe(3+). Residues histidine 81 and histidine 83 each contribute to the Zn(2+) site. Arginine 90, tyrosine 153, and histidine 186 together coordinate 4-imidazolone-5-propanoate. An N-formimidoyl-L-glutamate-binding site is contributed by tyrosine 153. Histidine 251 serves as a coordination point for Fe(3+). Zn(2+) is bound at residue histidine 251. Glutamate 254 is a 4-imidazolone-5-propanoate binding site. Fe(3+) is bound at residue aspartate 325. Aspartate 325 serves as a coordination point for Zn(2+). N-formimidoyl-L-glutamate-binding residues include asparagine 327 and glycine 329. Threonine 330 is a 4-imidazolone-5-propanoate binding site.

It belongs to the metallo-dependent hydrolases superfamily. HutI family. It depends on Zn(2+) as a cofactor. The cofactor is Fe(3+).

It is found in the cytoplasm. It carries out the reaction 4-imidazolone-5-propanoate + H2O = N-formimidoyl-L-glutamate. Its pathway is amino-acid degradation; L-histidine degradation into L-glutamate; N-formimidoyl-L-glutamate from L-histidine: step 3/3. Catalyzes the hydrolytic cleavage of the carbon-nitrogen bond in imidazolone-5-propanoate to yield N-formimidoyl-L-glutamate. It is the third step in the universal histidine degradation pathway. In Syntrophobacter fumaroxidans (strain DSM 10017 / MPOB), this protein is Imidazolonepropionase.